The chain runs to 76 residues: ATP synthase subunit 9, mitochondrial (76 aa).

A run of 2 helical transmembrane segments spans residues 11–31 (IGAG…GIVF) and 53–73 (ILGF…AFLI).

This sequence belongs to the ATPase C chain family. F-type ATPases have 2 components, CF(1) - the catalytic core - and CF(0) - the membrane proton channel. CF(1) has five subunits: alpha(3), beta(3), gamma(1), delta(1), epsilon(1). CF(0) has three main subunits: a, b and c.

The protein resides in the mitochondrion membrane. In terms of biological role, this protein is one of the chains of the nonenzymatic membrane component (F0) of mitochondrial ATPase. This chain is ATP synthase subunit 9, mitochondrial (ATP9), found in Chondrus crispus (Carrageen Irish moss).